The chain runs to 587 residues: Putative phagocytic receptor 1b (587 aa).

The signal sequence occupies residues 1-23; the sequence is MRLQILLIYLICIIVSSIVLVES. 9 consecutive transmembrane segments (helical) span residues 223–243, 294–314, 319–339, 354–374, 390–410, 448–468, 480–500, 524–544, and 556–576; these read LSVM…AIMI, IGWQ…FGMF, GGNM…ISGY, AWNI…VVIL, ILTM…LTVV, ILIA…YIFN, GILC…TVAL, VVFI…MYGL, and IVCF…SLIF.

The protein belongs to the nonaspanin (TM9SF) (TC 9.A.2) family.

Its subcellular location is the membrane. Functionally, involved in adhesion and phagocytosis of hydrophilic particles. This chain is Putative phagocytic receptor 1b (phg1b), found in Dictyostelium discoideum (Social amoeba).